A 320-amino-acid polypeptide reads, in one-letter code: Ferrochelatase (320 aa).

2 residues coordinate Fe cation: H194 and E275.

This sequence belongs to the ferrochelatase family. Monomer.

The protein resides in the cytoplasm. It catalyses the reaction heme b + 2 H(+) = protoporphyrin IX + Fe(2+). The protein operates within porphyrin-containing compound metabolism; protoheme biosynthesis; protoheme from protoporphyrin-IX: step 1/1. In terms of biological role, catalyzes the ferrous insertion into protoporphyrin IX. This Salmonella dublin (strain CT_02021853) protein is Ferrochelatase.